The primary structure comprises 96 residues: Protein RnfH (96 aa).

Belongs to the UPF0125 (RnfH) family.

The protein is Protein RnfH of Psychromonas ingrahamii (strain DSM 17664 / CCUG 51855 / 37).